A 96-amino-acid chain; its full sequence is Large ribosomal subunit protein uL23 (96 aa).

Belongs to the universal ribosomal protein uL23 family. In terms of assembly, part of the 50S ribosomal subunit. Contacts protein L29, and trigger factor when it is bound to the ribosome.

In terms of biological role, one of the early assembly proteins it binds 23S rRNA. One of the proteins that surrounds the polypeptide exit tunnel on the outside of the ribosome. Forms the main docking site for trigger factor binding to the ribosome. The protein is Large ribosomal subunit protein uL23 of Bacillus cytotoxicus (strain DSM 22905 / CIP 110041 / 391-98 / NVH 391-98).